Here is a 443-residue protein sequence, read N- to C-terminus: Probable glycine dehydrogenase (decarboxylating) subunit 1 (443 aa).

The protein belongs to the GcvP family. N-terminal subunit subfamily. The glycine cleavage system is composed of four proteins: P, T, L and H. In this organism, the P 'protein' is a heterodimer of two subunits.

It catalyses the reaction N(6)-[(R)-lipoyl]-L-lysyl-[glycine-cleavage complex H protein] + glycine + H(+) = N(6)-[(R)-S(8)-aminomethyldihydrolipoyl]-L-lysyl-[glycine-cleavage complex H protein] + CO2. The glycine cleavage system catalyzes the degradation of glycine. The P protein binds the alpha-amino group of glycine through its pyridoxal phosphate cofactor; CO(2) is released and the remaining methylamine moiety is then transferred to the lipoamide cofactor of the H protein. The chain is Probable glycine dehydrogenase (decarboxylating) subunit 1 from Solidesulfovibrio magneticus (strain ATCC 700980 / DSM 13731 / RS-1) (Desulfovibrio magneticus).